A 569-amino-acid polypeptide reads, in one-letter code: Proline--tRNA ligase (569 aa).

Belongs to the class-II aminoacyl-tRNA synthetase family. ProS type 1 subfamily. In terms of assembly, homodimer.

It is found in the cytoplasm. The catalysed reaction is tRNA(Pro) + L-proline + ATP = L-prolyl-tRNA(Pro) + AMP + diphosphate. Catalyzes the attachment of proline to tRNA(Pro) in a two-step reaction: proline is first activated by ATP to form Pro-AMP and then transferred to the acceptor end of tRNA(Pro). As ProRS can inadvertently accommodate and process non-cognate amino acids such as alanine and cysteine, to avoid such errors it has two additional distinct editing activities against alanine. One activity is designated as 'pretransfer' editing and involves the tRNA(Pro)-independent hydrolysis of activated Ala-AMP. The other activity is designated 'posttransfer' editing and involves deacylation of mischarged Ala-tRNA(Pro). The misacylated Cys-tRNA(Pro) is not edited by ProRS. The sequence is that of Proline--tRNA ligase from Nitratiruptor sp. (strain SB155-2).